Consider the following 90-residue polypeptide: Putative defensin-like protein 168 (90 aa).

The first 27 residues, 1 to 27, serve as a signal peptide directing secretion; it reads MKYFTLFMISYIFISIFVFSHIHDVEA. Disulfide bonds link C32-C90, C43-C66, C51-C84, and C64-C86.

This sequence belongs to the DEFL family.

Its subcellular location is the secreted. The protein is Putative defensin-like protein 168 of Arabidopsis thaliana (Mouse-ear cress).